We begin with the raw amino-acid sequence, 216 residues long: Ribosomal RNA small subunit methyltransferase G (216 aa).

S-adenosyl-L-methionine-binding positions include Gly-81, Phe-86, 130–131 (AE), and Arg-144.

The protein belongs to the methyltransferase superfamily. RNA methyltransferase RsmG family.

The protein resides in the cytoplasm. It carries out the reaction guanosine(527) in 16S rRNA + S-adenosyl-L-methionine = N(7)-methylguanosine(527) in 16S rRNA + S-adenosyl-L-homocysteine. Its function is as follows. Specifically methylates the N7 position of guanine in position 527 of 16S rRNA. The polypeptide is Ribosomal RNA small subunit methyltransferase G (Rhodospirillum centenum (strain ATCC 51521 / SW)).